Consider the following 397-residue polypeptide: uncharacterized protein (397 aa).

Positions 368–391 (TTKPGLHQPTQKRPTQTTSKPYIN) are disordered. Polar residues predominate over residues 375 to 388 (QPTQKRPTQTTSKP).

This is an uncharacterized protein from Acanthamoeba polyphaga mimivirus (APMV).